The chain runs to 167 residues: Putative lipoprotein YteS (167 aa).

Residues 1–20 (MTKRIRTALCVIVSVLFLAS) form the signal peptide. The N-palmitoyl cysteine moiety is linked to residue Cys21. Cys21 carries the S-diacylglycerol cysteine lipid modification.

It is found in the cell membrane. In terms of biological role, may play a role in the degradation of type I rhamnogalacturonan derived from plant cell walls. This chain is Putative lipoprotein YteS (yteS), found in Bacillus subtilis (strain 168).